A 122-amino-acid chain; its full sequence is Large ribosomal subunit protein uL14 (122 aa).

It belongs to the universal ribosomal protein uL14 family. In terms of assembly, part of the 50S ribosomal subunit. Forms a cluster with proteins L3 and L19. In the 70S ribosome, L14 and L19 interact and together make contacts with the 16S rRNA in bridges B5 and B8.

Functionally, binds to 23S rRNA. Forms part of two intersubunit bridges in the 70S ribosome. In Mycoplasma mobile (strain ATCC 43663 / 163K / NCTC 11711) (Mesomycoplasma mobile), this protein is Large ribosomal subunit protein uL14.